Here is a 160-residue protein sequence, read N- to C-terminus: Non-secretory ribonuclease (160 aa).

The first 27 residues, 1–27, serve as a signal peptide directing secretion; that stretch reads MVPKLFTSPICLLLLLGLMGVEGSLHA. The C-linked (Man) tryptophan glycan is linked to W34. Residue H42 is the Proton acceptor of the active site. N44 carries N-linked (GlcNAc...) asparagine glycosylation. 4 disulfide bridges follow: C50–C110, C64–C122, C82–C137, and C89–C98. A 3'-nitrotyrosine modification is found at Y60. 65-69 is a binding site for substrate; it reads KNQNT. Residues N92, N111, N118, and N138 are each glycosylated (N-linked (GlcNAc...) asparagine). H155 functions as the Proton donor in the catalytic mechanism.

This sequence belongs to the pancreatic ribonuclease family. In terms of assembly, interacts with and forms a tight 1:1 complex with RNH1. Dimerization of two such complexes may occur.

The protein resides in the lysosome. Its subcellular location is the cytoplasmic granule. It carries out the reaction an [RNA] containing cytidine + H2O = an [RNA]-3'-cytidine-3'-phosphate + a 5'-hydroxy-ribonucleotide-3'-[RNA].. It catalyses the reaction an [RNA] containing uridine + H2O = an [RNA]-3'-uridine-3'-phosphate + a 5'-hydroxy-ribonucleotide-3'-[RNA].. Functionally, this is a non-secretory ribonuclease. It is a pyrimidine specific nuclease with a slight preference for U. Cytotoxin and helminthotoxin. Possesses a wide variety of biological activities. This chain is Non-secretory ribonuclease (RNASE2), found in Chlorocebus aethiops (Green monkey).